A 283-amino-acid polypeptide reads, in one-letter code: Pantothenate synthetase (283 aa).

34–41 is an ATP binding site; that stretch reads MGALHEGH. Histidine 41 functions as the Proton donor in the catalytic mechanism. Residue glutamine 65 participates in (R)-pantoate binding. Glutamine 65 provides a ligand contact to beta-alanine. 152-155 lines the ATP pocket; sequence GQKD. Glutamine 158 contacts (R)-pantoate. ATP is bound by residues valine 181 and 189 to 192; that span reads MSSR.

The protein belongs to the pantothenate synthetase family. Homodimer.

Its subcellular location is the cytoplasm. It catalyses the reaction (R)-pantoate + beta-alanine + ATP = (R)-pantothenate + AMP + diphosphate + H(+). Its pathway is cofactor biosynthesis; (R)-pantothenate biosynthesis; (R)-pantothenate from (R)-pantoate and beta-alanine: step 1/1. Catalyzes the condensation of pantoate with beta-alanine in an ATP-dependent reaction via a pantoyl-adenylate intermediate. The chain is Pantothenate synthetase from Nitrobacter winogradskyi (strain ATCC 25391 / DSM 10237 / CIP 104748 / NCIMB 11846 / Nb-255).